Here is a 336-residue protein sequence, read N- to C-terminus: Peroxidase 20 (336 aa).

A signal peptide spans 1–24; the sequence is MEIKQKKVWLSLIVLYAITTSVLG. 4 cysteine pairs are disulfide-bonded: Cys-39–Cys-119, Cys-72–Cys-77, Cys-125–Cys-331, and Cys-204–Cys-239. His-70 (proton acceptor) is an active-site residue. 5 residues coordinate Ca(2+): Asp-71, Val-74, Gly-76, Asp-78, and Ser-80. Residue Pro-167 coordinates substrate. Asn-170 carries N-linked (GlcNAc...) asparagine glycosylation. His-197 provides a ligand contact to heme b. Residue Thr-198 participates in Ca(2+) binding. Ca(2+)-binding residues include Asp-252, Thr-255, and Asp-260.

The protein belongs to the peroxidase family. Classical plant (class III) peroxidase subfamily. It depends on heme b as a cofactor. The cofactor is Ca(2+).

It is found in the secreted. The catalysed reaction is 2 a phenolic donor + H2O2 = 2 a phenolic radical donor + 2 H2O. Its function is as follows. Removal of H(2)O(2), oxidation of toxic reductants, biosynthesis and degradation of lignin, suberization, auxin catabolism, response to environmental stresses such as wounding, pathogen attack and oxidative stress. These functions might be dependent on each isozyme/isoform in each plant tissue. In terms of biological role, may be implicated in the systemic acquired resistance response via the salicylic acid signal transduction pathway. The sequence is that of Peroxidase 20 (PER20) from Arabidopsis thaliana (Mouse-ear cress).